Consider the following 561-residue polypeptide: SUN domain-containing protein 5 (561 aa).

The helical transmembrane segment at 36–56 (GSFFERSISLVLLLWCFLFLV) threads the bilayer. The SUN domain occupies 158–318 (NGSSQLVNNG…SVVEVFGIDA (161 aa)). The interval 345–367 (ADEKQDGEIKSNRTDQIGKETEA) is disordered. Residues 454 to 499 (MEKELRDLELWKTLVASRVESLARGNSALRLDVEKIVKEQANLESK) adopt a coiled-coil conformation. Transmembrane regions (helical) follow at residues 501–521 (LGVL…LVST) and 540–560 (PDSG…IHLL).

As to quaternary structure, forms homomers. Interacts with SUN3 and TIK.

Its subcellular location is the membrane. In terms of biological role, encodes a member of the mid-SUN subfamily of SUN-domain proteins. It is involved in early seed development and nuclear morphology. [TAIR]. The polypeptide is SUN domain-containing protein 5 (Arabidopsis thaliana (Mouse-ear cress)).